Consider the following 89-residue polypeptide: Small ribosomal subunit protein uS15 (89 aa).

It belongs to the universal ribosomal protein uS15 family. Part of the 30S ribosomal subunit. Forms a bridge to the 50S subunit in the 70S ribosome, contacting the 23S rRNA.

Functionally, one of the primary rRNA binding proteins, it binds directly to 16S rRNA where it helps nucleate assembly of the platform of the 30S subunit by binding and bridging several RNA helices of the 16S rRNA. In terms of biological role, forms an intersubunit bridge (bridge B4) with the 23S rRNA of the 50S subunit in the ribosome. The sequence is that of Small ribosomal subunit protein uS15 from Desulfotalea psychrophila (strain LSv54 / DSM 12343).